The primary structure comprises 471 residues: Fructokinase-like 1, chloroplastic (471 aa).

Residues 1–38 (MASLLIFPHLHHFDSSLDRREVLVVRHSQASRRFLTPK) constitute a chloroplast transit peptide. The segment at 36–85 (TPKASINGSGITNGAAAETTSKPSRKGRKKKQTSTVIEKDNTETDPELNP) is disordered. Positions 39 to 57 (ASINGSGITNGAAAETTSK) are enriched in polar residues. Residues 58-67 (PSRKGRKKKQ) show a composition bias toward basic residues.

It belongs to the carbohydrate kinase PfkB family. As to quaternary structure, interacts with CITRX/TRXz. Interacts with PTAC7. Self-interacts. Binds to FLN2. Associates with the plastid-encoded RNA polymerase (PEP) complex.

The protein localises to the plastid. It is found in the chloroplast. Its function is as follows. Required for proper chloroplast development, most likely through regulating plastid-encoded polymerase (PEP) dependent chloroplast transcription. Acts as a component of the transcriptionally active plastid chromosome that is required for plastid gene expression. The polypeptide is Fructokinase-like 1, chloroplastic (Arabidopsis thaliana (Mouse-ear cress)).